The primary structure comprises 1079 residues: MYGISSFYCRDPPNLTCLTWIGIDLAVAASQTDRCLYEIIVPPSLGQVRVSRISDPIPSTIISMTALPPGNGSSASSSTSGPAVMANTASSYQITKGSGSSSTSASQATIVAGCANGTLIFIQADVLGLGCTSQRVSVRRQKSISVSSYVGGEDAIHPVTSLCMMQPRGSSLLVGLETGTVLLLTMMGGLYQFRQILKSNLNAPVHAINSIDRNRAAIAYGGSVTVINITKNNSTELSYKLQSDGDAITALANTGRVLVLGCEHRGAIVLDLLSGLEISVIPPPPYDAVVSVSSQPVASNGFIIATRRGVVIGCRENGTVRSCATLEYDSAHLPVSKIAADGAPATLLSPLADSSMTNVDENLGSSVGGIRDLAFAPYGGSFLCLCLNGLAVGYLAPQRLSSGYITIEVTGLTTVMITDARLQVSEVYTAPEPVISLFLSRFAHTLRLGATTASSVIVWTPPTMAKISSFSLEGGMPLVTKIQWITEPVRSTSYGDMIRPSTVQNQPSTQGLPNRQQQELDFDNLLEKPGDTLQQTESRPLLKSFSQKKLEHDKASNPPIKTAAYVRNPPRYIVLGDSYHLVVDISGEANIVSATTLALVTSIYISSLDSDRQIAIIDSALAYVEGGTTLRIIDPRSGNFILRGVIHHKAVLDLTIGISSQQHIRNASETSAKEGTQGNAVSDFALGSVFSNLTGHQAGKPVDATASTSSLKQTEMSSNDASSYVLALLDTSNSLYVGRLTTSPQAYAKLGNSMSTAILQQSKFLDSIPYSIQFIAQTDLLCMLISESQSLPQALSQIGETVGSDCKLRLVVDACPVRTSIITEDPVFVTPTTIDYSSVQRSNAAVSIFEEDPSRILAAYRMLSRSNIHTIHRITPMVLKNDGLMSNAITMSHAVLGLAGDSSQMVVAVPEFSVLLNYLAKSGNTQRALRLCRFLDQKPLWAQMATYCIEANNIQHLQSALSGLGMVAKASYCHSISSHNEVNAGAVKLAIGDPEGANILSSQGKIGAAILAACDLWNFSKALELCRGNKKYMPLLVYLRTKYHNNLGMSNCNNEEPWLSLSRQYGNVSEDEIHRLMKG.

The interval 495-514 is disordered; sequence GDMIRPSTVQNQPSTQGLPN. Over residues 501 to 514 the composition is skewed to polar residues; sequence STVQNQPSTQGLPN.

It is found in the cell projection. Its subcellular location is the cilium. The protein localises to the flagellum. It localises to the cytoplasm. The protein resides in the cytoskeleton. It is found in the flagellum axoneme. Its subcellular location is the flagellum basal body. Functionally, component of the intraflagellar transport complex B (IFT-B) involved in flagellar assembly. In Giardia intestinalis (strain ATCC 50803 / WB clone C6) (Giardia lamblia), this protein is Intraflagellar transport protein 80.